We begin with the raw amino-acid sequence, 399 residues long: Bombesin receptor subtype-3 (399 aa).

Residues 1-41 (MSQRQSQSPNQTLISITNDTETSSSVVSNDTTHKGWTGDNS) are Extracellular-facing. Asn10, Asn18, and Asn29 each carry an N-linked (GlcNAc...) asparagine glycan. A helical membrane pass occupies residues 42-63 (PGIEALCAIYITYAGIISVGIL). Over 64–82 (GNAILIKVFFKTKSMQTVP) the chain is Cytoplasmic. The chain crosses the membrane as a helical span at residues 83-103 (NIFITSLAFGDLLLLLTCVPV). The Extracellular portion of the chain corresponds to 104–121 (DATHYLAEGWLFGKVGCK). Cys120 and Cys203 are oxidised to a cystine. Residues 122–143 (VLSFIRLTSVGVSVFTLTILSA) traverse the membrane as a helical segment. At 144-163 (DRYKAVVKPLERQPPNAILK) the chain is on the cytoplasmic side. A helical membrane pass occupies residues 164 to 184 (TCAKAGGIWIVSMIFALPEAI). Topologically, residues 185–220 (FSNVYTFQDPNRNVTFESCNSYPISERLLQEIHSLL) are extracellular. The chain crosses the membrane as a helical span at residues 221–241 (CFLVFYIIPLSIISVYYSLIA). Residues 242-272 (RTLYKSTLNIPTEEQSHARKQIESRKRIAKT) lie on the Cytoplasmic side of the membrane. The helical transmembrane segment at 273-293 (VLVLVALFALCWLPNHLLYLY) threads the bilayer. The Extracellular segment spans residues 294–313 (HSFTYESYANHSDVPFVIII). The chain crosses the membrane as a helical span at residues 314-333 (FSRVLAFSNSCVNPFALYWL). Residues 334-399 (SKTFQQHFKA…SSAKKGEDKV (66 aa)) lie on the Cytoplasmic side of the membrane. Cys347 carries S-palmitoyl cysteine lipidation.

This sequence belongs to the G-protein coupled receptor 1 family. As to quaternary structure, interacts with C6orf89.

It localises to the cell membrane. Its function is as follows. Role in sperm cell division, maturation, or function. This receptor mediates its action by association with G proteins that activate a phosphatidylinositol-calcium second messenger system. The protein is Bombesin receptor subtype-3 (Brs3) of Mus musculus (Mouse).